The chain runs to 475 residues: ADP-ribose glycohydrolase MACROD2 (475 aa).

A Macro domain is found at 59-240 (QEAPQMKKSL…IYKKKMNEFF (182 aa)). Substrate-binding positions include 77–79 (GDI), 90–92 (AAN), and 97–102 (GGGGVD). A Glycyl lysine isopeptide (Lys-Gly) (interchain with G-Cter in ubiquitin) cross-link involves residue K170. Substrate-binding positions include 185–191 (ISTGIYG) and F224. Disordered regions lie at residues 241–306 (PVDD…SQEA) and 324–475 (GVNT…EDLQ). Composition is skewed to basic and acidic residues over residues 251-261 (ADMKEDSEGPE) and 335-359 (SEDK…DSDM). A compositionally biased stretch (polar residues) spans 360–375 (TNHSVCDQELPNGQEN). Over residues 376–386 (DSAKSEGKTEA) the composition is skewed to basic and acidic residues. Polar residues-rich tracts occupy residues 387-402 (ESPS…SPNQ) and 440-469 (SQGS…PTES).

The protein belongs to the MacroD-type family. MacroD1/2-like subfamily. As to quaternary structure, interacts with ADP-ribosylated PARP1. As to expression, expressed in the kidney.

The protein resides in the nucleus. It carries out the reaction 2''-O-acetyl-ADP-D-ribose + H2O = ADP-D-ribose + acetate + H(+). The enzyme catalyses 4-O-(ADP-D-ribosyl)-L-aspartyl-[protein] + H2O = L-aspartyl-[protein] + ADP-D-ribose + H(+). It catalyses the reaction 5-O-(ADP-D-ribosyl)-L-glutamyl-[protein] + H2O = L-glutamyl-[protein] + ADP-D-ribose + H(+). The catalysed reaction is alpha-NAD(+) + H2O = ADP-D-ribose + nicotinamide + H(+). With respect to regulation, subject to product inhibition by ADP-ribose. Removes ADP-ribose from aspartate and glutamate residues in proteins bearing a single ADP-ribose moiety. Inactive towards proteins bearing poly-ADP-ribose. Deacetylates O-acetyl-ADP ribose, a signaling molecule generated by the deacetylation of acetylated lysine residues in histones and other proteins. The sequence is that of ADP-ribose glycohydrolase MACROD2 from Mus musculus (Mouse).